The sequence spans 269 residues: DNA-binding protein RFXANK (269 aa).

The tract at residues 1–36 (MEPTQVAENLVPNQQPPVPDLEDPEDTRDESPENSD) is disordered. 5 ANK repeats span residues 88 to 127 (LDSLSIHQLAAQGELSQLKDHLRKGACPACTCLSGNNLIN), 132 to 161 (RGFTPLIWASAFGEIETVRFLLDWGADPHI), 165 to 194 (ERESALSLASMGGYTDIVRLLLDRDVDINI), 198 to 227 (NGGTPLLYAVRGNHVKCVEALLARGADLTT), and 231 to 260 (SGYTPMDLAVALGYRKVQQVMESHILRLFQ).

Forms homodimers. The RFX heterotetrameric complex consists of 2 molecules of RFX5 and one each of RFXAP and RFX-B/RFXANK; with each subunit representing a separate complementation group. Interacts (via ankyrin repeats) with RFX5 (via PxLPxI/L motif); the interaction is direct. RFX forms cooperative DNA binding complexes with X2BP and CBF/NF-Y. RFX associates with CIITA to form an active transcriptional complex. Interacts with RAF1. Interacts with RFX7. In terms of processing, phosphorylated by RAF1. In terms of tissue distribution, expressed primarily in thymus, lung and testis.

Its subcellular location is the cytoplasm. It localises to the nucleus. Functionally, activates transcription from class II MHC promoters. Activation requires the activity of the MHC class II transactivator/CIITA. May regulate other genes in the cell. RFX binds the X1 box of MHC-II promoters. May also potentiate the activation of RAF1. In Mus musculus (Mouse), this protein is DNA-binding protein RFXANK (Rfxank).